A 281-amino-acid polypeptide reads, in one-letter code: Lectin (281 aa).

Residues 1 to 26 (MATYKLCSVLALSLTLFLLILNKVNS) form the signal peptide. Residues Asn43 and Asn139 are each glycosylated (N-linked (GlcNAc...) asparagine). The propeptide occupies 269–281 (AVIPTSNHNTFAI).

It belongs to the leguminous lectin family. As to quaternary structure, homodimer. In terms of processing, a minor C-terminal proteolytic processing site is observed at position 268.

Galactose and N-acetyllactosamine specific lectin. Binds to the H-2 blood type determinant fucosyl-N-acetyllactosamine. The sequence is that of Lectin from Erythrina corallodendron (Coral tree).